The chain runs to 101 residues: Large ribosomal subunit protein eL43 (101 aa).

The C4-type zinc finger occupies 40-62; the sequence is CPSCRSLVRLQRIAFGIWKCPKC.

Belongs to the eukaryotic ribosomal protein eL43 family. Zn(2+) is required as a cofactor.

The chain is Large ribosomal subunit protein eL43 from Pyrobaculum neutrophilum (strain DSM 2338 / JCM 9278 / NBRC 100436 / V24Sta) (Thermoproteus neutrophilus).